The sequence spans 136 residues: Putative nickel-responsive regulator (136 aa).

4 residues coordinate Ni(2+): His-76, His-87, His-89, and Cys-95.

Belongs to the transcriptional regulatory CopG/NikR family. Requires Ni(2+) as cofactor.

In terms of biological role, transcriptional regulator. The protein is Putative nickel-responsive regulator of Desulfotalea psychrophila (strain LSv54 / DSM 12343).